Consider the following 320-residue polypeptide: GMP reductase (320 aa).

The active-site Thioimidate intermediate is the C174. Residue 203 to 226 (IIADGGLRVHGDIAKSIRMGASFC) coordinates NADP(+).

The protein belongs to the IMPDH/GMPR family. GuaC type 2 subfamily.

The enzyme catalyses IMP + NH4(+) + NADP(+) = GMP + NADPH + 2 H(+). Catalyzes the irreversible NADPH-dependent deamination of GMP to IMP. It functions in the conversion of nucleobase, nucleoside and nucleotide derivatives of G to A nucleotides, and in maintaining the intracellular balance of A and G nucleotides. In Mycoplasma mycoides subsp. mycoides SC (strain CCUG 32753 / NCTC 10114 / PG1), this protein is GMP reductase.